A 108-amino-acid polypeptide reads, in one-letter code: UPF0060 membrane protein Mfla_0485 (108 aa).

Transmembrane regions (helical) follow at residues 7-27, 33-53, 63-83, and 87-107; these read FSLFILTALAEILGCYLPYLW, SVWLLLPAAISLAVFAWLLSL, AAYGGVYIFVALGWLWLVDGI, and TWDFVGVGVALAGMAIIMFAP.

The protein belongs to the UPF0060 family.

The protein localises to the cell inner membrane. This chain is UPF0060 membrane protein Mfla_0485, found in Methylobacillus flagellatus (strain ATCC 51484 / DSM 6875 / VKM B-1610 / KT).